The primary structure comprises 589 residues: Oligo-1,6-glucosidase IMA3 (589 aa).

Residue aspartate 215 is the Nucleophile of the active site. Glutamate 277 functions as the Proton donor in the catalytic mechanism.

It belongs to the glycosyl hydrolase 13 family.

The protein resides in the cytoplasm. It catalyses the reaction Hydrolysis of (1-&gt;6)-alpha-D-glucosidic linkages in some oligosaccharides produced from starch and glycogen by alpha-amylase, and in isomaltose.. Alpha-glucosidase with broad substrate specificity for alpha-1,4- and alpha-1,6-glucosides. Not required for isomaltose utilization, but overexpression allows the IMA1 null mutant to grow on isomaltose. In Saccharomyces cerevisiae (strain ATCC 204508 / S288c) (Baker's yeast), this protein is Oligo-1,6-glucosidase IMA3 (IMA3).